A 201-amino-acid polypeptide reads, in one-letter code: 3-isopropylmalate dehydratase small subunit (201 aa).

It belongs to the LeuD family. LeuD type 1 subfamily. In terms of assembly, heterodimer of LeuC and LeuD.

It catalyses the reaction (2R,3S)-3-isopropylmalate = (2S)-2-isopropylmalate. It functions in the pathway amino-acid biosynthesis; L-leucine biosynthesis; L-leucine from 3-methyl-2-oxobutanoate: step 2/4. Catalyzes the isomerization between 2-isopropylmalate and 3-isopropylmalate, via the formation of 2-isopropylmaleate. This is 3-isopropylmalate dehydratase small subunit from Shigella boydii serotype 18 (strain CDC 3083-94 / BS512).